A 291-amino-acid chain; its full sequence is DNA repair protein RecO (291 aa).

It belongs to the RecO family.

Involved in DNA repair and RecF pathway recombination. The polypeptide is DNA repair protein RecO (Cupriavidus pinatubonensis (strain JMP 134 / LMG 1197) (Cupriavidus necator (strain JMP 134))).